The primary structure comprises 1560 residues: Lysine-specific demethylase 5C (1560 aa).

In terms of domain architecture, JmjN spans C14–P55. Positions T79 to S169 constitute an ARID domain. A compositionally biased stretch (polar residues) spans L197–N207. The tract at residues L197–I227 is disordered. Residues K205, K229, K244, and K274 each participate in a glycyl lysine isopeptide (Lys-Gly) (interchain with G-Cter in SUMO2) cross-link. S287 is subject to Phosphoserine. K295 participates in a covalent cross-link: Glycyl lysine isopeptide (Lys-Gly) (interchain with G-Cter in SUMO2). A phosphoserine mark is found at S301 and S317. Residues V326–V372 form a PHD-type 1 zinc finger. Y440 lines the 2-oxoglutarate pocket. A JmjC domain is found at E468–R634. Fe cation contacts are provided by H514 and E516. 3 residues coordinate 2-oxoglutarate: S522, N524, and K532. Residue H602 participates in Fe cation binding. The C5HC2 zinc finger occupies C707 to M759. S893 and S897 each carry phosphoserine. K1127 is covalently cross-linked (Glycyl lysine isopeptide (Lys-Gly) (interchain with G-Cter in SUMO2)). Residues I1161–A1181 are disordered. Residues S1169–A1181 show a composition bias toward low complexity. The PHD-type 2 zinc finger occupies I1187–M1248. Disordered regions lie at residues Q1316 to K1371 and E1444 to L1560. A compositionally biased stretch (basic and acidic residues) spans P1335 to P1345. S1359 bears the Phosphoserine mark. A compositionally biased stretch (basic residues) spans S1448 to V1463. A compositionally biased stretch (basic and acidic residues) spans D1464 to R1481. Acidic residues predominate over residues E1488 to G1503. Over residues S1516–T1544 the composition is skewed to polar residues.

This sequence belongs to the JARID1 histone demethylase family. As to quaternary structure, part of two distinct complexes, one containing E2F6, and the other containing REST. Interacts with ZMYND8. It depends on Fe(2+) as a cofactor. As to expression, expressed in all tissues examined. Highest levels found in brain and skeletal muscle.

It localises to the nucleus. It catalyses the reaction N(6),N(6),N(6)-trimethyl-L-lysyl(4)-[histone H3] + 3 2-oxoglutarate + 3 O2 = L-lysyl(4)-[histone H3] + 3 formaldehyde + 3 succinate + 3 CO2. The inhibitor KDOAM-25 and others inhibit its demethylase activity, resulting to cell cycle arrest in myeloma cells. Functionally, histone demethylase that specifically demethylates 'Lys-4' of histone H3, thereby playing a central role in histone code. Does not demethylate histone H3 'Lys-9', H3 'Lys-27', H3 'Lys-36', H3 'Lys-79' or H4 'Lys-20'. Demethylates trimethylated and dimethylated but not monomethylated H3 'Lys-4'. Participates in transcriptional repression of neuronal genes by recruiting histone deacetylases and REST at neuron-restrictive silencer elements. Represses the CLOCK-BMAL1 heterodimer-mediated transcriptional activation of the core clock component PER2. This is Lysine-specific demethylase 5C from Homo sapiens (Human).